Here is a 127-residue protein sequence, read N- to C-terminus: MAIVGLGTDIVKIERIEAHVARSGDKLARRVLTEAELAIYIAHSQPNRYLAKRFAAKEAAAKALGTGIGRGVSFQHIHIGNTPDGAPTIRFTDGAQQRLAFLNGVFGHISIADEKSYAIATVILESC.

Mg(2+) is bound by residues Asp-9 and Glu-58.

It belongs to the P-Pant transferase superfamily. AcpS family. Mg(2+) serves as cofactor.

The protein resides in the cytoplasm. The catalysed reaction is apo-[ACP] + CoA = holo-[ACP] + adenosine 3',5'-bisphosphate + H(+). Transfers the 4'-phosphopantetheine moiety from coenzyme A to a Ser of acyl-carrier-protein. The chain is Holo-[acyl-carrier-protein] synthase from Shewanella putrefaciens (strain CN-32 / ATCC BAA-453).